The primary structure comprises 291 residues: Elongation factor Ts (291 aa).

The segment at 78–81 (TDFV) is involved in Mg(2+) ion dislocation from EF-Tu.

The protein belongs to the EF-Ts family.

The protein resides in the cytoplasm. Its function is as follows. Associates with the EF-Tu.GDP complex and induces the exchange of GDP to GTP. It remains bound to the aminoacyl-tRNA.EF-Tu.GTP complex up to the GTP hydrolysis stage on the ribosome. This is Elongation factor Ts from Ureaplasma urealyticum serovar 10 (strain ATCC 33699 / Western).